A 1358-amino-acid chain; its full sequence is MSYSYAEKKRIRKEFGVLPHILDVPYLLSIQTESYKKFLTVDAAKGRLHSGLEIVLKQSFPVESKNGQYELHYVDYQIGEPTFDETECQVRGATYDAPLNVKLRLVVYNKDALPNEKIVEDIREEYVYMGDIPLMTTNGTFIINGTERVVVSQLHRSPGAFFSKDDSEEGAFSARIIPYRGSWLDFEFDSKGIIWARIDRKRKFCATVILKALGYTQEQILENFSESKTITFNSKGFALRLDNLSNMKGELLKFDIVDAQDNVIVKKNKKLTSRDVKKIKDAGVDSVAIDFDLVSTLRVAKDIVNEATGEVIAYANDDVTESLLKSCVEVGMLELEVIDFITTERGRYISDTLKYDLTRNTDEALVEIYKVLRPGDPPAAASVKALFEGLFFIESRYSLSDIGRMKLNARLGSDKVSKDIYTLENSDIVGVIEELINIRDGKGKVDDIDHLGNRRVRSVGEMVENQFRIGLYRVEKGIRESMSLVHKDKLMPKDIVNSKPITAAIKEFFTSGALSQFMDQDNPLSEVTHKRRISALGPGGLSRDRAGFEVRDVHATHYGRLCPIETPEGPNIGLINSLASYARVNDYGFLEAPYRKVVDGKVTDEIEYLSAIDEDNYVIAQASTKLDENNHFVEDIIQCRSGGEAIFTESSRVQYMDVSAKQMVSAAAALIPFLEHDDANRVLMGANMQRQAVPTLKSEKPLVGTGMEKIVARDSGNCIIARNVGEVAEVDSNRIVIKVDTEKSQTSNLVDIYSLTKFKRSNKNTCINQRPIVNVGDKVEAGDILADGFATDFGELSLGHNLMVAFMPWNGYNFEDSILLSERIVKDDKYTSIHIEEFTCVARDTKLGPEEITADIPNVSESSLAKLDESGIVHIGANVEAGDILVAKITPKAEQQLTPEERLLRAIFNEKASNVVDSSLRMPSGTSGTVINVQVFENDKGGKSKRALKIEKELIDKARKDFDEEFAVIESVVKSSIEQEVVGAKIQKAKGLKKGAILTKEFLATLPLSKWLEISFEDEKLEEKVQNAREYYEEAKIAIDAKFEAKKKSITQSNELSPGVLKTVKVFVAIKKRIQPGDKMAGRHGNKGVVSRVLPVEDMPYMEDGTPVDVCLNPLGIPSRMNIGQILEAHLGLASYGLGKKIEKTLEKTRKAAELRKTLEEVYNSVGDKKVNLEALNDEEILTLCDNLKGGVPIATPVFDGAKEEDIKSLLKIGGFATNGQMKLFDGRTGKPFDRHVTVGYMYMLKLDHLVDDKMHARSTGSYSLVTQQPLGGKAQFGGQRFGEMEVWALQAYGAAYTLREMLTVKSDDIAGRSKMYKNIVDGKLTMNVDVPESFNVLRNEVRALGIDMDFDYSSEEE.

This sequence belongs to the RNA polymerase beta chain family. As to quaternary structure, the RNAP catalytic core consists of 2 alpha, 1 beta, 1 beta' and 1 omega subunit. When a sigma factor is associated with the core the holoenzyme is formed, which can initiate transcription.

The catalysed reaction is RNA(n) + a ribonucleoside 5'-triphosphate = RNA(n+1) + diphosphate. In terms of biological role, DNA-dependent RNA polymerase catalyzes the transcription of DNA into RNA using the four ribonucleoside triphosphates as substrates. The sequence is that of DNA-directed RNA polymerase subunit beta from Francisella tularensis subsp. holarctica (strain LVS).